We begin with the raw amino-acid sequence, 79 residues long: Cyclin-dependent kinases regulatory subunit 2 (79 aa).

At lysine 4 the chain carries N6-acetyllysine.

It belongs to the CKS family. As to quaternary structure, forms a homohexamer that can probably bind six kinase subunits.

Binds to the catalytic subunit of the cyclin dependent kinases and is essential for their biological function. This is Cyclin-dependent kinases regulatory subunit 2 (Cks2) from Mus musculus (Mouse).